The primary structure comprises 179 residues: ATP-dependent protease subunit HslV (179 aa).

Thr5 is a catalytic residue. Positions 164 and 167 each coordinate Na(+).

This sequence belongs to the peptidase T1B family. HslV subfamily. A double ring-shaped homohexamer of HslV is capped on each side by a ring-shaped HslU homohexamer. The assembly of the HslU/HslV complex is dependent on binding of ATP.

It is found in the cytoplasm. It catalyses the reaction ATP-dependent cleavage of peptide bonds with broad specificity.. Its activity is regulated as follows. Allosterically activated by HslU binding. Protease subunit of a proteasome-like degradation complex believed to be a general protein degrading machinery. The sequence is that of ATP-dependent protease subunit HslV from Carboxydothermus hydrogenoformans (strain ATCC BAA-161 / DSM 6008 / Z-2901).